Consider the following 245-residue polypeptide: Protein canopy homolog 4 (245 aa).

An N-terminal signal peptide occupies residues 1-27; sequence MCGLRFIMGPVRLEILLFILAAYGAWA. Cystine bridges form between C44–C202, C47–C190, and C100–C162. The tract at residues 207–245 is disordered; sequence WTGKEKISDGQEEADDEEEEEEEEITKTSGNPKHDPEDL. The stretch at 209–237 forms a coiled coil; it reads GKEKISDGQEEADDEEEEEEEEITKTSGN. Acidic residues predominate over residues 216–230; the sequence is GQEEADDEEEEEEEE.

This sequence belongs to the canopy family. Interacts with TLR4. Highly expressed in lung, spleen, thymus, and uterus. Moderately expressed in kidney, stomach and placenta. Weakly expressed in brain, heart, liver, small intestine, skeletal muscle and testis.

Its subcellular location is the secreted. Functionally, plays a role in the regulation of the cell surface expression of TLR4. In Mus musculus (Mouse), this protein is Protein canopy homolog 4 (Cnpy4).